The chain runs to 187 residues: Protein McbG (187 aa).

The protein belongs to the pentapeptide repeat protein family.

Functionally, together with proteins McbE and McbF this protein causes immunity to the peptide antibiotic microcin B17 (MccB17), which inhibits DNA replication in Enterobacteriaceae by induction of the SOS repair system. McbG alone can provide some protection. In Escherichia coli, this protein is Protein McbG (mcbG).